The chain runs to 515 residues: Aldehyde dehydrogenase tropH (515 aa).

238–243 (GSVATG) is a binding site for NAD(+). The active-site Proton acceptor is E260. C295 functions as the Nucleophile in the catalytic mechanism.

This sequence belongs to the aldehyde dehydrogenase family.

The catalysed reaction is an aldehyde + NAD(+) + H2O = a carboxylate + NADH + 2 H(+). The protein operates within secondary metabolite biosynthesis. In terms of biological role, aldehyde dehydrogenase; part of the gene cluster that mediates the biosynthesis of the tropolone class of fungal maleic anhydrides. The pathway begins with the synthesis of 3-methylorcinaldehyde by the non-reducing polyketide synthase (PKS) tropA. 3-methylorcinaldehyde is the substrate for the FAD-dependent monooxygenase tropB to yield a dearomatized hydroxycyclohexadione. The 2-oxoglutarate-dependent dioxygenase tropC then performs the oxidative ring expansion to provide the first tropolone metabolite stipitaldehyde. Trop D converts stipitaldehyde into stipitacetal which is in turn converted to stipitalide by the short-chain dehydrogenase/reductase tropE. The next steps involve tropF, tropG, tropH, tropI and tropJ to form successive tropolone maleic anhydrides including stipitaldehydic, stipitatonic and stipitatic acids. The chain is Aldehyde dehydrogenase tropH from Talaromyces stipitatus (strain ATCC 10500 / CBS 375.48 / QM 6759 / NRRL 1006) (Penicillium stipitatum).